The sequence spans 314 residues: Serine/threonine-protein phosphatase CPPED1 (314 aa).

Serine 2 carries the post-translational modification Phosphoserine. A catalytic region spans residues 47–250; sequence KAWSTGDCDN…KVVFSGHYHR (204 aa). Positions 53, 90, 127, and 247 each coordinate a divalent metal cation. Residue serine 294 is modified to Phosphoserine.

It belongs to the metallophosphoesterase superfamily. CPPED1 family. A divalent metal cation is required as a cofactor. As to expression, expressed in subcutaneous adipose tissue.

It localises to the cytoplasm. The catalysed reaction is O-phospho-L-seryl-[protein] + H2O = L-seryl-[protein] + phosphate. The enzyme catalyses O-phospho-L-threonyl-[protein] + H2O = L-threonyl-[protein] + phosphate. In terms of biological role, protein phosphatase that dephosphorylates AKT family kinase specifically at 'Ser-473', blocking cell cycle progression and promoting cell apoptosis. May play an inhibitory role in glucose uptake by adipocytes. The polypeptide is Serine/threonine-protein phosphatase CPPED1 (CPPED1) (Homo sapiens (Human)).